A 184-amino-acid polypeptide reads, in one-letter code: Probable sensory rhodopsin transducer (184 aa).

The next 2 membrane-spanning stretches (helical) occupy residues 14–34 (TLGV…VNVY) and 52–72 (GLVS…TIIG). The HAMP domain maps to 73–125 (RERTAAVETLAAQARQIEQGELDVDLATNRTDDVGDIYRALAVLRDSEQLDRQ).

Belongs to the methyl-accepting chemotaxis (MCP) protein family. As to quaternary structure, interacts with Xop2/SRM.

It localises to the membrane. Functionally, the HtrM-Xop2/SRM complex may interact with CheB or CheR and modulate their availability to Sop1 or Sop2. This Haloarcula marismortui (strain ATCC 43049 / DSM 3752 / JCM 8966 / VKM B-1809) (Halobacterium marismortui) protein is Probable sensory rhodopsin transducer (htrM).